The chain runs to 193 residues: Recombination protein RecR (193 aa).

The C4-type zinc finger occupies 61–76 (CSSCNALSESEVCEIC). In terms of domain architecture, Toprim spans 84–170 (SQLCMVLHPR…TFTKIAQGVP (87 aa)).

This sequence belongs to the RecR family.

Its function is as follows. May play a role in DNA repair. It seems to be involved in an RecBC-independent recombinational process of DNA repair. It may act with RecF and RecO. The protein is Recombination protein RecR of Helicobacter pylori (strain P12).